The sequence spans 375 residues: MSCPVIELTQQLIRRPSLSPDDAGCQALLIERLQAVGFTVEPMNIGDTQNFWAWRGTGETLAFAGHTDVVPAGDVERWINPPFEPTIRDGMLFGRGAADMKGSLAAMVVAAERFVAQHPHHRGRLAFLITSDEEASATNGTVKVVEALMARGERLDYCLVGEPSSSEVVGDVVKNGRRGSLTCNLTIHGVQGHVAYPHLADNPVHRAAPMLNELVGIEWDRGNEFFPPTSMQIANIQAGTGSNNVIPGDLHVQFNFRFSTELTDEMIKQRVVALLEKYQLRYTLDWWLSGQPFLTARGKLVDAVVNAVHHYNEIKPQLLTTGGTSDGRFIARMGAQVVELGPVNATIHKINECVKASDLQLLARMYQRIMEQLVA.

Zn(2+) is bound at residue His-66. Asp-68 is a catalytic residue. Asp-99 is a Zn(2+) binding site. The Proton acceptor role is filled by Glu-133. Zn(2+)-binding residues include Glu-134, Glu-162, and His-348.

The protein belongs to the peptidase M20A family. DapE subfamily. As to quaternary structure, homodimer. It depends on Zn(2+) as a cofactor. The cofactor is Co(2+).

The catalysed reaction is N-succinyl-(2S,6S)-2,6-diaminopimelate + H2O = (2S,6S)-2,6-diaminopimelate + succinate. It participates in amino-acid biosynthesis; L-lysine biosynthesis via DAP pathway; LL-2,6-diaminopimelate from (S)-tetrahydrodipicolinate (succinylase route): step 3/3. Functionally, catalyzes the hydrolysis of N-succinyl-L,L-diaminopimelic acid (SDAP), forming succinate and LL-2,6-diaminopimelate (DAP), an intermediate involved in the bacterial biosynthesis of lysine and meso-diaminopimelic acid, an essential component of bacterial cell walls. The protein is Succinyl-diaminopimelate desuccinylase of Cronobacter sakazakii (strain ATCC BAA-894) (Enterobacter sakazakii).